The following is a 226-amino-acid chain: Transcriptional regulatory protein DpiA (226 aa).

One can recognise a Response regulatory domain in the interval 6-122 (TLLIVEDETP…RLGQTLTRFR (117 aa)). D57 is modified (4-aspartylphosphate). A DNA-binding region (H-T-H motif) is located at residues 180–199 (AETVAQALTISRTTARRYLE).

Phosphorylated and activated by DpiB.

It is found in the cytoplasm. Functionally, member of the two-component regulatory system DpiA/DpiB, which is essential for expression of citrate-specific fermentation genes and genes involved in plasmid inheritance. Could be involved in response to both the presence of citrate and external redox conditions. This chain is Transcriptional regulatory protein DpiA (dpiA), found in Escherichia coli O157:H7.